A 147-amino-acid chain; its full sequence is Gastrula-specific protein 17 (147 aa).

The tract at residues 1–119 (MSQNLDFLAL…TQVYGNHQPG (119 aa)) is disordered. Composition is skewed to polar residues over residues 20–36 (SPTS…STPP), 45–57 (RQIS…YTNP), and 74–88 (LLQN…SPTA).

In Xenopus laevis (African clawed frog), this protein is Gastrula-specific protein 17 (gs17).